Reading from the N-terminus, the 832-residue chain is Serine/threonine-protein kinase Doa (832 aa).

Disordered stretches follow at residues 1 to 86, 135 to 158, 179 to 215, and 258 to 419; these read MVAA…SKYI, LLQH…QQYP, SDPF…KQAP, and SKIG…QLQQ. The segment covering 8-18 has biased composition (polar residues); sequence VPTSSSSSAAT. Over residues 20–32 the composition is skewed to basic and acidic residues; the sequence is RQKDVDNKLEKCL. Low complexity-rich tracts occupy residues 40–53, 137–158, and 183–203; these read TSSN…SNNN, QHQQ…QQYP, and MQQQ…KLQQ. Residues 271–282 show a composition bias toward polar residues; it reads HSASFSSAQRPT. 3 stretches are compositionally biased toward low complexity: residues 285 to 310, 347 to 365, and 396 to 419; these read QFHQ…QHQH, QMQP…TQFQ, and SSSS…QLQQ. Positions 479–799 constitute a Protein kinase domain; sequence YKIMATLGEG…LGEALHHPFF (321 aa). Residues 485-493 and Lys-508 each bind ATP; that span reads LGEGTFGRV. Asp-605 (proton acceptor) is an active-site residue. The interval 809-832 is disordered; sequence GEVSNKQPLSSGSSSRERSHSLSR. A compositionally biased stretch (basic and acidic residues) spans 823–832; it reads SRERSHSLSR.

It belongs to the protein kinase superfamily. CMGC Ser/Thr protein kinase family. Lammer subfamily. Interacts (via N-terminus) with x16 (via Arg/Ser-rich region). Interacts with eEF1gamma (via C-terminus); the interaction is probably direct, is transient and leads to phosphorylation of eEF1gamma by Doa. Requires Mg(2+) as cofactor. In terms of processing, autophosphorylated on serine, threonine and tyrosine residues. In terms of tissue distribution, ubiquitous expression in embryos. Stage 17 embryos show elevated expression in CNS and brain. Ubiquitous expression in larval imaginal disks. Increased expression posterior to the eye-antennal disk morphogenetic furrow.

It localises to the cytoplasm. The protein localises to the cytosol. It is found in the nucleus. The enzyme catalyses L-seryl-[protein] + ATP = O-phospho-L-seryl-[protein] + ADP + H(+). The catalysed reaction is L-threonyl-[protein] + ATP = O-phospho-L-threonyl-[protein] + ADP + H(+). It carries out the reaction L-tyrosyl-[protein] + ATP = O-phospho-L-tyrosyl-[protein] + ADP + H(+). Its function is as follows. Dual specificity kinase involved in the negative regulation of microtubule-based transport through phsophorylation of the microtuble-binding protein eEF1gamma. May function in the control of alternative splicing by phosphorylating serine/arginine-rich splicing factors, the SR proteins, including x16. Negative regulator of the copia retrotransposon element of the white (w) gene. In the eye, it is required for normal pigmentation, photoreceptor cell development and for organization of interommatidial bristles. Also essential for embryonic segmentation and differentiation of the nervous system. In terms of biological role, may be the specific isoform involved in regulation of microtubule-based transport through phosphorylation of the microtubule binding protein eEF1gamma. The polypeptide is Serine/threonine-protein kinase Doa (Drosophila melanogaster (Fruit fly)).